A 634-amino-acid polypeptide reads, in one-letter code: DNA-directed RNA polymerase subunit gamma (634 aa).

Zn(2+) is bound by residues C74, C76, C89, and C92. Mg(2+)-binding residues include D471, D473, and D475.

It belongs to the RNA polymerase beta' chain family. RpoC1 subfamily. In cyanobacteria the RNAP catalytic core is composed of 2 alpha, 1 beta, 1 beta', 1 gamma and 1 omega subunit. When a sigma factor is associated with the core the holoenzyme is formed, which can initiate transcription. It depends on Mg(2+) as a cofactor. Requires Zn(2+) as cofactor.

It catalyses the reaction RNA(n) + a ribonucleoside 5'-triphosphate = RNA(n+1) + diphosphate. Functionally, DNA-dependent RNA polymerase catalyzes the transcription of DNA into RNA using the four ribonucleoside triphosphates as substrates. This is DNA-directed RNA polymerase subunit gamma from Prochlorococcus marinus (strain MIT 9215).